Reading from the N-terminus, the 250-residue chain is Phosphoribosylaminoimidazole-succinocarboxamide synthase (250 aa).

It belongs to the SAICAR synthetase family.

The enzyme catalyses 5-amino-1-(5-phospho-D-ribosyl)imidazole-4-carboxylate + L-aspartate + ATP = (2S)-2-[5-amino-1-(5-phospho-beta-D-ribosyl)imidazole-4-carboxamido]succinate + ADP + phosphate + 2 H(+). The protein operates within purine metabolism; IMP biosynthesis via de novo pathway; 5-amino-1-(5-phospho-D-ribosyl)imidazole-4-carboxamide from 5-amino-1-(5-phospho-D-ribosyl)imidazole-4-carboxylate: step 1/2. This chain is Phosphoribosylaminoimidazole-succinocarboxamide synthase, found in Parasynechococcus marenigrum (strain WH8102).